Reading from the N-terminus, the 275-residue chain is MANPTIIRLQDGNVMPQLGLGVWKASNEEVIAAIHKALEVGYRSIDTATAYQNEEGVGKALKAASVAREELFITTKLWNDDQKRPREALQESLKKLQLDYLDLYLMHWPVPAIDHYVDAWKGMIALQKEGLVKSIGVCNFQIHHLQRLIDETGVTPVINQIELHPLMQQRQLHAWNATHKIQTESWSPLAQGGEGVFDQKVIRELADKYGKTPAQIVIRWHLDCGLVVIPKSVTPSRIAENFAVWDFRLDKDELGEIAKLDQGKRLGPDPDQFGG.

The Proton donor role is filled by Y51. H107 is a binding site for substrate. 187-241 (SPLAQGGEGVFDQKVIRELADKYGKTPAQIVIRWHLDCGLVVIPKSVTPSRIAEN) is an NADP(+) binding site.

It belongs to the aldo/keto reductase family. Monomer.

It localises to the cytoplasm. It carries out the reaction hydroxyacetone + NADP(+) = methylglyoxal + NADPH + H(+). In terms of biological role, aldo-keto reductase that significantly contributes to cellular methylglyoxal detoxification by catalyzing the NADPH-dependent conversion of methylglyoxal to acetol. This chain is Methylglyoxal reductase DkgA, found in Salmonella typhimurium (strain LT2 / SGSC1412 / ATCC 700720).